The primary structure comprises 258 residues: Deoxyribose-phosphate aldolase 2 (258 aa).

D102 functions as the Proton donor/acceptor in the catalytic mechanism. The active-site Schiff-base intermediate with acetaldehyde is the K165. The Proton donor/acceptor role is filled by K199.

This sequence belongs to the DeoC/FbaB aldolase family. DeoC type 2 subfamily.

It localises to the cytoplasm. The enzyme catalyses 2-deoxy-D-ribose 5-phosphate = D-glyceraldehyde 3-phosphate + acetaldehyde. It participates in carbohydrate degradation; 2-deoxy-D-ribose 1-phosphate degradation; D-glyceraldehyde 3-phosphate and acetaldehyde from 2-deoxy-alpha-D-ribose 1-phosphate: step 2/2. Its function is as follows. Catalyzes a reversible aldol reaction between acetaldehyde and D-glyceraldehyde 3-phosphate to generate 2-deoxy-D-ribose 5-phosphate. The polypeptide is Deoxyribose-phosphate aldolase 2 (deoC2) (Vibrio vulnificus (strain YJ016)).